A 79-amino-acid polypeptide reads, in one-letter code: Large ribosomal subunit protein uL22 (79 aa).

It belongs to the universal ribosomal protein uL22 family. In terms of assembly, part of the 50S ribosomal subunit.

Functionally, this protein binds specifically to 23S rRNA; its binding is stimulated by other ribosomal proteins, e.g. L4, L17, and L20. It is important during the early stages of 50S assembly. It makes multiple contacts with different domains of the 23S rRNA in the assembled 50S subunit and ribosome. Its function is as follows. The globular domain of the protein is located near the polypeptide exit tunnel on the outside of the subunit, while an extended beta-hairpin is found that lines the wall of the exit tunnel in the center of the 70S ribosome. The protein is Large ribosomal subunit protein uL22 (rplV) of Clover proliferation phytoplasma.